A 148-amino-acid polypeptide reads, in one-letter code: Ribosomal RNA large subunit methyltransferase H 2 (148 aa).

Residues L74, G106, and 125-130 (FSKMTF) contribute to the S-adenosyl-L-methionine site.

The protein belongs to the RNA methyltransferase RlmH family. In terms of assembly, homodimer.

The protein localises to the cytoplasm. The catalysed reaction is pseudouridine(1915) in 23S rRNA + S-adenosyl-L-methionine = N(3)-methylpseudouridine(1915) in 23S rRNA + S-adenosyl-L-homocysteine + H(+). Specifically methylates the pseudouridine at position 1915 (m3Psi1915) in 23S rRNA. This is Ribosomal RNA large subunit methyltransferase H 2 from Caldanaerobacter subterraneus subsp. tengcongensis (strain DSM 15242 / JCM 11007 / NBRC 100824 / MB4) (Thermoanaerobacter tengcongensis).